A 69-amino-acid polypeptide reads, in one-letter code: ATP synthase F(0) complex subunit e, mitochondrial (69 aa).

Lysine 34 is subject to N6-acetyllysine.

Belongs to the ATPase e subunit family. In terms of assembly, component of the ATP synthase complex composed at least of ATP5F1A/subunit alpha, ATP5F1B/subunit beta, ATP5MC1/subunit c (homooctomer), MT-ATP6/subunit a, MT-ATP8/subunit 8, ATP5ME/subunit e, ATP5MF/subunit f, ATP5MG/subunit g, ATP5MK/subunit k, ATP5MJ/subunit j, ATP5F1C/subunit gamma, ATP5F1D/subunit delta, ATP5F1E/subunit epsilon, ATP5PF/subunit F6, ATP5PB/subunit b, ATP5PD/subunit d, ATP5PO/subunit OSCP. ATP synthase complex consists of a soluble F(1) head domain (subunits alpha(3) and beta(3)) - the catalytic core - and a membrane F(0) domain - the membrane proton channel (subunits c, a, 8, e, f, g, k and j). These two domains are linked by a central stalk (subunits gamma, delta, and epsilon) rotating inside the F1 region and a stationary peripheral stalk (subunits F6, b, d, and OSCP).

Its subcellular location is the mitochondrion. The protein localises to the mitochondrion inner membrane. Its function is as follows. Subunit e, of the mitochondrial membrane ATP synthase complex (F(1)F(0) ATP synthase or Complex V) that produces ATP from ADP in the presence of a proton gradient across the membrane which is generated by electron transport complexes of the respiratory chain. ATP synthase complex consist of a soluble F(1) head domain - the catalytic core - and a membrane F(1) domain - the membrane proton channel. These two domains are linked by a central stalk rotating inside the F(1) region and a stationary peripheral stalk. During catalysis, ATP synthesis in the catalytic domain of F(1) is coupled via a rotary mechanism of the central stalk subunits to proton translocation. In vivo, can only synthesize ATP although its ATP hydrolase activity can be activated artificially in vitro. Part of the complex F(0) domain. The polypeptide is ATP synthase F(0) complex subunit e, mitochondrial (Cricetulus longicaudatus (Long-tailed dwarf hamster)).